We begin with the raw amino-acid sequence, 288 residues long: ATP synthase gamma chain (288 aa).

This sequence belongs to the ATPase gamma chain family. F-type ATPases have 2 components, CF(1) - the catalytic core - and CF(0) - the membrane proton channel. CF(1) has five subunits: alpha(3), beta(3), gamma(1), delta(1), epsilon(1). CF(0) has three main subunits: a, b and c.

The protein resides in the cell inner membrane. Its function is as follows. Produces ATP from ADP in the presence of a proton gradient across the membrane. The gamma chain is believed to be important in regulating ATPase activity and the flow of protons through the CF(0) complex. The polypeptide is ATP synthase gamma chain (Glaesserella parasuis serovar 5 (strain SH0165) (Haemophilus parasuis)).